The following is a 190-amino-acid chain: Large ribosomal subunit protein bL17 (190 aa).

A compositionally biased stretch (low complexity) spans 135–165 (AKAAPAAEEAPAEEAPAAEEAATEEAPAAEE). The interval 135 to 190 (AKAAPAAEEAPAEEAPAAEEAATEEAPAAEETATEEAAAEEAPAAEEAPAEEKDAK) is disordered.

It belongs to the bacterial ribosomal protein bL17 family. Part of the 50S ribosomal subunit. Contacts protein L32.

This Pseudarthrobacter chlorophenolicus (strain ATCC 700700 / DSM 12829 / CIP 107037 / JCM 12360 / KCTC 9906 / NCIMB 13794 / A6) (Arthrobacter chlorophenolicus) protein is Large ribosomal subunit protein bL17.